A 426-amino-acid polypeptide reads, in one-letter code: 3-phosphoshikimate 1-carboxyvinyltransferase (426 aa).

3 residues coordinate 3-phosphoshikimate: Lys-21, Ser-22, and Arg-26. Residue Lys-21 coordinates phosphoenolpyruvate. Gly-91 and Arg-119 together coordinate phosphoenolpyruvate. 3-phosphoshikimate contacts are provided by Ser-162, Ser-163, Gln-164, Ser-190, Asp-304, and Lys-331. Gln-164 is a binding site for phosphoenolpyruvate. Asp-304 functions as the Proton acceptor in the catalytic mechanism. Phosphoenolpyruvate is bound by residues Arg-335, Arg-377, and Lys-403.

The protein belongs to the EPSP synthase family. Monomer.

The protein resides in the cytoplasm. The enzyme catalyses 3-phosphoshikimate + phosphoenolpyruvate = 5-O-(1-carboxyvinyl)-3-phosphoshikimate + phosphate. The protein operates within metabolic intermediate biosynthesis; chorismate biosynthesis; chorismate from D-erythrose 4-phosphate and phosphoenolpyruvate: step 6/7. In terms of biological role, catalyzes the transfer of the enolpyruvyl moiety of phosphoenolpyruvate (PEP) to the 5-hydroxyl of shikimate-3-phosphate (S3P) to produce enolpyruvyl shikimate-3-phosphate and inorganic phosphate. The chain is 3-phosphoshikimate 1-carboxyvinyltransferase from Clostridium kluyveri (strain ATCC 8527 / DSM 555 / NBRC 12016 / NCIMB 10680 / K1).